A 288-amino-acid chain; its full sequence is Bis(5'-nucleosyl)-tetraphosphatase, symmetrical (288 aa).

It belongs to the Ap4A hydrolase family.

It catalyses the reaction P(1),P(4)-bis(5'-adenosyl) tetraphosphate + H2O = 2 ADP + 2 H(+). Functionally, hydrolyzes diadenosine 5',5'''-P1,P4-tetraphosphate to yield ADP. In Pseudomonas putida (strain ATCC 700007 / DSM 6899 / JCM 31910 / BCRC 17059 / LMG 24140 / F1), this protein is Bis(5'-nucleosyl)-tetraphosphatase, symmetrical.